We begin with the raw amino-acid sequence, 531 residues long: Serine protease gd (531 aa).

The first 19 residues, 1–19 (MRLHLAAILILCIEHVTKA), serve as a signal peptide directing secretion. The disordered stretch occupies residues 155-174 (PEEEEVRKTDDKPPSTPHIQ). Residues 246 to 531 (IESDSADSLP…FLDWITAFVI (286 aa)) enclose the Peptidase S1 domain. An N-linked (GlcNAc...) asparagine glycan is attached at N272. A disulfide bond links C280 and C296. Residues H295 and D350 each act as charge relay system in the active site. Residues N397 and N445 are each glycosylated (N-linked (GlcNAc...) asparagine). The cysteines at positions 432 and 449 are disulfide-linked. The active-site Charge relay system is the S471.

This sequence belongs to the peptidase S1 family. In terms of processing, proteolytically activated by the protease ndl. In terms of tissue distribution, expression begins in previtellogenic stages and is seen in germline-derived nurse cells of the germarium. Expression continues throughout oogenesis with transcripts from the nurse cells accumulating in the oocytes. Most abundant in the ovaries, the level of protein decreases from the moment of egg laying and is essentially gone by 4 hours.

It localises to the secreted. In terms of biological role, component of the extracellular signaling pathway that establishes the dorsal-ventral pathway of the embryo. A protease cascade involving ndl, gd, snk and ea results in activation of the spz Toll receptor ligand; acts downstream of ndl but upstream of snk and ea. Activation of ea requires activation of the ndl-gd-snk protease cascade and sulfation of a vitelline membrane component by pip. Localized activation of the Toll receptor in the ventral region of the embryo defines cell identities along the dorsal-ventral continuum. This Drosophila melanogaster (Fruit fly) protein is Serine protease gd.